Reading from the N-terminus, the 390-residue chain is 1-deoxy-D-xylulose 5-phosphate reductoisomerase (390 aa).

NADPH-binding residues include Thr10, Gly11, Ser12, Ile13, Gly36, Arg37, Asn38, and Asn121. A 1-deoxy-D-xylulose 5-phosphate-binding site is contributed by Lys122. Glu123 provides a ligand contact to NADPH. Asp147 is a Mn(2+) binding site. Ser148, Glu149, Ser173, and His196 together coordinate 1-deoxy-D-xylulose 5-phosphate. Glu149 contributes to the Mn(2+) binding site. Gly202 provides a ligand contact to NADPH. 4 residues coordinate 1-deoxy-D-xylulose 5-phosphate: Ser209, Asn214, Lys215, and Glu218. Glu218 provides a ligand contact to Mn(2+). Positions 367-390 (AASEHGRREAEKRVGARAHAPASR) are disordered. A compositionally biased stretch (basic and acidic residues) spans 370–380 (EHGRREAEKRV).

This sequence belongs to the DXR family. It depends on Mg(2+) as a cofactor. Mn(2+) serves as cofactor.

The catalysed reaction is 2-C-methyl-D-erythritol 4-phosphate + NADP(+) = 1-deoxy-D-xylulose 5-phosphate + NADPH + H(+). The protein operates within isoprenoid biosynthesis; isopentenyl diphosphate biosynthesis via DXP pathway; isopentenyl diphosphate from 1-deoxy-D-xylulose 5-phosphate: step 1/6. Functionally, catalyzes the NADPH-dependent rearrangement and reduction of 1-deoxy-D-xylulose-5-phosphate (DXP) to 2-C-methyl-D-erythritol 4-phosphate (MEP). This Anaeromyxobacter dehalogenans (strain 2CP-1 / ATCC BAA-258) protein is 1-deoxy-D-xylulose 5-phosphate reductoisomerase.